A 301-amino-acid chain; its full sequence is Phosphatidylserine decarboxylase proenzyme (301 aa).

Residues Asp117, His173, and Ser260 each act as charge relay system; for autoendoproteolytic cleavage activity in the active site. Ser260 (schiff-base intermediate with substrate; via pyruvic acid; for decarboxylase activity) is an active-site residue. Ser260 carries the pyruvic acid (Ser); by autocatalysis modification.

Belongs to the phosphatidylserine decarboxylase family. PSD-B subfamily. Prokaryotic type II sub-subfamily. In terms of assembly, heterodimer of a large membrane-associated beta subunit and a small pyruvoyl-containing alpha subunit. Pyruvate is required as a cofactor. In terms of processing, is synthesized initially as an inactive proenzyme. Formation of the active enzyme involves a self-maturation process in which the active site pyruvoyl group is generated from an internal serine residue via an autocatalytic post-translational modification. Two non-identical subunits are generated from the proenzyme in this reaction, and the pyruvate is formed at the N-terminus of the alpha chain, which is derived from the carboxyl end of the proenzyme. The autoendoproteolytic cleavage occurs by a canonical serine protease mechanism, in which the side chain hydroxyl group of the serine supplies its oxygen atom to form the C-terminus of the beta chain, while the remainder of the serine residue undergoes an oxidative deamination to produce ammonia and the pyruvoyl prosthetic group on the alpha chain. During this reaction, the Ser that is part of the protease active site of the proenzyme becomes the pyruvoyl prosthetic group, which constitutes an essential element of the active site of the mature decarboxylase.

The protein localises to the cell membrane. The catalysed reaction is a 1,2-diacyl-sn-glycero-3-phospho-L-serine + H(+) = a 1,2-diacyl-sn-glycero-3-phosphoethanolamine + CO2. Its pathway is phospholipid metabolism; phosphatidylethanolamine biosynthesis; phosphatidylethanolamine from CDP-diacylglycerol: step 2/2. Catalyzes the formation of phosphatidylethanolamine (PtdEtn) from phosphatidylserine (PtdSer). This chain is Phosphatidylserine decarboxylase proenzyme, found in Chlamydia trachomatis serovar L2 (strain ATCC VR-902B / DSM 19102 / 434/Bu).